The following is a 429-amino-acid chain: Adenylosuccinate synthetase (429 aa).

GTP is bound by residues G12–K18 and G40–T42. The Proton acceptor role is filled by D13. Mg(2+)-binding residues include D13 and G40. IMP-binding positions include D13–K16, N38–H41, T129, R143, Q224, T239, and R303. The active-site Proton donor is the H41. V299–R305 contributes to the substrate binding site. GTP-binding positions include R305, K331–D333, and G413–G415.

Belongs to the adenylosuccinate synthetase family. In terms of assembly, homodimer. The cofactor is Mg(2+).

It is found in the cytoplasm. It catalyses the reaction IMP + L-aspartate + GTP = N(6)-(1,2-dicarboxyethyl)-AMP + GDP + phosphate + 2 H(+). Its pathway is purine metabolism; AMP biosynthesis via de novo pathway; AMP from IMP: step 1/2. In terms of biological role, plays an important role in the de novo pathway of purine nucleotide biosynthesis. Catalyzes the first committed step in the biosynthesis of AMP from IMP. The sequence is that of Adenylosuccinate synthetase from Rhodococcus jostii (strain RHA1).